Reading from the N-terminus, the 592-residue chain is Aspartate--tRNA ligase (592 aa).

Glutamate 171 is a binding site for L-aspartate. Positions 195-198 are aspartate; it reads QLFK. Residue arginine 217 coordinates L-aspartate. Residues 217 to 219 and glutamine 226 contribute to the ATP site; that span reads RDE. Histidine 448 lines the L-aspartate pocket. Glutamate 482 contacts ATP. Arginine 489 provides a ligand contact to L-aspartate. An ATP-binding site is contributed by 534 to 537; sequence GLDR.

It belongs to the class-II aminoacyl-tRNA synthetase family. Type 1 subfamily. As to quaternary structure, homodimer.

It localises to the cytoplasm. The catalysed reaction is tRNA(Asp) + L-aspartate + ATP = L-aspartyl-tRNA(Asp) + AMP + diphosphate. Catalyzes the attachment of L-aspartate to tRNA(Asp) in a two-step reaction: L-aspartate is first activated by ATP to form Asp-AMP and then transferred to the acceptor end of tRNA(Asp). The chain is Aspartate--tRNA ligase from Vibrio campbellii (strain ATCC BAA-1116).